The chain runs to 187 residues: Putative glutathione-dependent formaldehyde-activating enzyme (187 aa).

A CENP-V/GFA domain is found at 20-166 (FPGGKLYCHC…FESVGLKTYD (147 aa)). C27, C29, C48, C50, C53, C95, and C98 together coordinate Zn(2+).

It belongs to the Gfa family. The cofactor is Zn(2+).

The catalysed reaction is S-(hydroxymethyl)glutathione = glutathione + formaldehyde. The protein operates within one-carbon metabolism; formaldehyde degradation; formate from formaldehyde (glutathione route): step 1/3. In terms of biological role, catalyzes the condensation of formaldehyde and glutathione to S-hydroxymethylglutathione. In Talaromyces marneffei (strain ATCC 18224 / CBS 334.59 / QM 7333) (Penicillium marneffei), this protein is Putative glutathione-dependent formaldehyde-activating enzyme.